Here is a 228-residue protein sequence, read N- to C-terminus: Lipoprotein-releasing system ATP-binding protein LolD (228 aa).

Residues 5–228 (FALSAISKSF…SGTLQNYTDY (224 aa)) form the ABC transporter domain. Position 40–47 (40–47 (GPSGSGKS)) interacts with ATP.

The protein belongs to the ABC transporter superfamily. Lipoprotein translocase (TC 3.A.1.125) family. The complex is composed of two ATP-binding proteins (LolD) and two transmembrane proteins (LolC and LolE).

The protein resides in the cell inner membrane. In terms of biological role, part of the ABC transporter complex LolCDE involved in the translocation of mature outer membrane-directed lipoproteins, from the inner membrane to the periplasmic chaperone, LolA. Responsible for the formation of the LolA-lipoprotein complex in an ATP-dependent manner. The polypeptide is Lipoprotein-releasing system ATP-binding protein LolD (Ehrlichia ruminantium (strain Gardel)).